The sequence spans 833 residues: Zinc transporter ZIP10 (833 aa).

A signal peptide spans 1-25 (MKVHIHTKFCLICLLTFIFHHCNHC). The segment covering 30–48 (DHGPEELHRHHRGMTESES) has biased composition (basic and acidic residues). Disordered regions lie at residues 30–54 (DHGP…FSVQ) and 137–167 (AENH…IKAD). Residues 137–147 (AENHTTTSVTS) are compositionally biased toward polar residues. Residues 152-167 (KCDPEKEAAELPIKAD) are compositionally biased toward basic and acidic residues. N-linked (GlcNAc...) asparagine glycosylation is found at Asn-191 and Asn-198. A compositionally biased stretch (basic and acidic residues) spans 200–209 (SVAHSEHGEP). Disordered stretches follow at residues 200–257 (SVAH…NHDH) and 271–335 (RVHS…EDDR). Asn-218 carries an N-linked (GlcNAc...) asparagine glycan. Over residues 229–241 (VKVRRKEKGKRKK) the composition is skewed to basic residues. Composition is skewed to basic and acidic residues over residues 281–315 (HLPE…EAPH) and 326–335 (SHKDQSEDDR). An N-linked (GlcNAc...) asparagine glycan is attached at Asn-341. The next 2 helical transmembrane spans lie at 413–433 (IISI…VPII) and 440–460 (FLLT…ALLH). The interval 466-485 (QGGHDHSHQHTHGHGHSHGH) is disordered. Residues 497 to 517 (VLKGLVALGGIYLLFIIEHCI) traverse the membrane as a helical segment. Phosphothreonine occurs at positions 538 and 555. The residue at position 593 (Ser-593) is a Phosphoserine. Transmembrane regions (helical) follow at residues 689-709 (AIGA…IAVF), 734-754 (IVYN…GTAV), 761-781 (ITLW…LVDM), and 803-823 (FILQ…IALY).

The protein belongs to the ZIP transporter (TC 2.A.5) family. Interacts with SLC39A6. This interaction triggers cells to undergo EMT and mitosis. Found in a complex with SLC39A6, SLC39A10 and with the 'Ser-727' phosphorylated form of STAT3 throughout mitosis. Found in a complex with SLC39A6, SLC39A10 and with NCAM1; this complex controls NCAM1 phosphorylation and integration into focal adhesion complexes during epithelial-tomesenchymal transition. Found in a complex with SLC39A6, SLC39A10 and with GSK3B that controls NCAM1 phosphorylation. Post-translationally, undergoes N-terminal ectodomain shedding. In terms of tissue distribution, expressed in the liver, kidney and brain.

The protein resides in the cell membrane. The protein localises to the apical cell membrane. It carries out the reaction Zn(2+)(in) = Zn(2+)(out). Functionally, zinc-influx transporter. When associated with SLC39A6, the heterodimer formed by SLC39A10 and SLC39A6 mediates cellular zinc uptake to trigger cells to undergo epithelial-to-mesenchymal transition (EMT). mediates cellular zinc uptake to trigger cells to undergo epithelial-to-mesenchymal transition (EMT). SLC39A10-SLC39A6 heterodimers play also an essentiel role in initiating mitosis by importing zinc into cells to initiate a pathway resulting in the onset of mitosis. Plays an important for both mature B-cell maintenance and humoral immune responses. When associated with SLC39A10, the heterodimer controls NCAM1 phosphorylation and integration into focal adhesion complexes during EMT. This chain is Zinc transporter ZIP10, found in Mus musculus (Mouse).